The following is a 129-amino-acid chain: Large ribosomal subunit protein bL12 (129 aa).

The protein belongs to the bacterial ribosomal protein bL12 family. In terms of assembly, homodimer. Part of the ribosomal stalk of the 50S ribosomal subunit. Forms a multimeric L10(L12)X complex, where L10 forms an elongated spine to which 2 to 4 L12 dimers bind in a sequential fashion. Binds GTP-bound translation factors.

Functionally, forms part of the ribosomal stalk which helps the ribosome interact with GTP-bound translation factors. Is thus essential for accurate translation. The polypeptide is Large ribosomal subunit protein bL12 (Pelotomaculum thermopropionicum (strain DSM 13744 / JCM 10971 / SI)).